A 627-amino-acid polypeptide reads, in one-letter code: Dual specificity testis-specific protein kinase 1 (627 aa).

Residues 1–36 (MAGERPPLRGPGPGEAPGEGPGGAGGGPGRGRPSSY) form a disordered region. The span at 11–30 (PGPGEAPGEGPGGAGGGPGR) shows a compositional bias: gly residues. Positions 52 to 309 (FDCAEKIGAG…TEITQHLEQI (258 aa)) constitute a Protein kinase domain. ATP contacts are provided by residues 58–66 (IGAGFFSEV) and Lys-81. Asp-170 functions as the Proton acceptor in the catalytic mechanism. Phosphoserine; by autocatalysis is present on Ser-215. The span at 316 to 330 (ATPLAKPPLTKAPLT) shows a compositional bias: low complexity. Disordered stretches follow at residues 316-373 (ATPL…SWGD), 436-485 (RCRS…GLAP), 500-519 (CSSASQPWSPRSGPPLNNNP), and 532-565 (REPWNRAQHSLPRAAALERTEPSPPPSAPREPEE). Residue Arg-338 is modified to Omega-N-methylarginine. Over residues 348 to 357 (PDPRLSRSRS) the composition is skewed to basic and acidic residues. The segment at 421–525 (VTTPDILVQP…NNNPPAVVVN (105 aa)) is required for interaction with YWHAB. Positions 528–625 (QGWAREPWNR…PTPSLQLPGA (98 aa)) are required for interaction with PARVA. Positions 528 to 627 (QGWAREPWNR…PSLQLPGARS (100 aa)) are required for interaction with SPRED1 and SPRY2. Required for TESK1-mediated dephosphorylation of SPRY2 and SPRY2 inhibition of ERK phosphorylation.

The protein belongs to the protein kinase superfamily. TKL Ser/Thr protein kinase family. In terms of assembly, interacts (via both C- and N-termini) with SPRY4 (via C-terminus); the interaction inhibits TESK1 kinase activity. Interacts with TAOK1; the interaction inhibits TAOK1 kinase activity. Interacts (via C-terminus) with SPRED1 (via C-terminus); the interaction inhibits TESK1 kinase activity. Interacts (via C-terminus) with PARVA/PARVIN (via C-terminus); the interaction inhibits TESK1 kinase activity. Interacts with YWHAB/14-3-3 beta; the interaction is dependent on the phosphorylation of TESK1 Ser-439 and inhibits TESK1 kinase activity. Interacts with SPRY1, SPRY3 and SPRED2. Interacts (via C-terminus) with SPRY2 (via C-terminus); the interaction disrupts SPRY2 interaction with PPP2CA/PP2A-C, possibly by vesicular sequestration of SPRY2. Therefore dephosphorylation of SPRY2 by the serine/threonine-protein phosphatase 2A (PP2A) holoenzyme is lost, inhibiting its interaction with GRB2. Mg(2+) is required as a cofactor. The cofactor is Mn(2+). Autophosphorylated on serine and tyrosine residues. Expressed in testes and brain (at protein level).

The protein localises to the cytoplasm. Its subcellular location is the perinuclear region. It localises to the cytoskeleton. The protein resides in the microtubule organizing center. It is found in the centrosome. The protein localises to the cell projection. Its subcellular location is the lamellipodium. The catalysed reaction is L-seryl-[protein] + ATP = O-phospho-L-seryl-[protein] + ADP + H(+). It catalyses the reaction L-threonyl-[protein] + ATP = O-phospho-L-threonyl-[protein] + ADP + H(+). It carries out the reaction L-tyrosyl-[protein] + ATP = O-phospho-L-tyrosyl-[protein] + ADP + H(+). Activated by autophosphorylation on Ser-215. Kinase activity is inhibited by SPRED1. Its function is as follows. Dual specificity protein kinase activity catalyzing autophosphorylation and phosphorylation of exogenous substrates on both serine/threonine and tyrosine residues. Regulates the cellular cytoskeleton by enhancing actin stress fiber formation via phosphorylation of cofilin and by preventing microtubule breakdown via inhibition of TAOK1/MARKK kinase activity. Inhibits podocyte motility via regulation of actin cytoskeletal dynamics and phosphorylation of CFL1. Positively regulates integrin-mediated cell spreading, via phosphorylation of cofilin. Suppresses ciliogenesis via multiple pathways; phosphorylation of CFL1, suppression of ciliary vesicle directional trafficking to the ciliary base, and by facilitating YAP1 nuclear localization where it acts as a transcriptional corepressor of the TEAD4 target genes AURKA and PLK1. Probably plays a central role at and after the meiotic phase of spermatogenesis. This Mus musculus (Mouse) protein is Dual specificity testis-specific protein kinase 1 (Tesk1).